The primary structure comprises 1200 residues: PAN2-PAN3 deadenylation complex catalytic subunit Pan2 (1200 aa).

WD repeat units lie at residues 153–193 (DENE…QKYA), 195–231 (ETPG…VEHE), 244–280 (VHGN…AITP), and 328–367 (PVGP…SFNP). The segment at 368–484 (YSRETEFALP…PTGREEEPLH (117 aa)) is linker. The USP domain occupies 485 to 923 (TVSKKYRKVT…VPAILYYVKR (439 aa)). Position 784 is a phosphoserine (Ser784). Residues 974–1146 (VGLDAEFVTL…EDARTALQLY (173 aa)) enclose the Exonuclease domain. 4 residues coordinate a divalent metal cation: Asp977, Glu979, Asp1086, and Asp1138. Ser1188 bears the Phosphoserine mark.

It belongs to the peptidase C19 family. PAN2 subfamily. As to quaternary structure, forms a heterotrimer with an asymmetric homodimer of the regulatory subunit PAN3 to form the poly(A)-nuclease (PAN) deadenylation complex. Interacts with PAN3 isoform 1/Pan3L and isoform 3/Pan3S. Interacts with ZFP36. A divalent metal cation is required as a cofactor.

It localises to the cytoplasm. Its subcellular location is the P-body. The protein localises to the nucleus. The catalysed reaction is Exonucleolytic cleavage of poly(A) to 5'-AMP.. With respect to regulation, positively regulated by the regulatory subunit PAN3. Its function is as follows. Catalytic subunit of the poly(A)-nuclease (PAN) deadenylation complex, one of two cytoplasmic mRNA deadenylases involved in general and miRNA-mediated mRNA turnover. PAN specifically shortens poly(A) tails of RNA and the activity is stimulated by poly(A)-binding protein (PABP). PAN deadenylation is followed by rapid degradation of the shortened mRNA tails by the CCR4-NOT complex. Deadenylated mRNAs are then degraded by two alternative mechanisms, namely exosome-mediated 3'-5' exonucleolytic degradation, or deadenylation-dependent mRNA decaping and subsequent 5'-3' exonucleolytic degradation by XRN1. Also acts as an important regulator of the HIF1A-mediated hypoxic response. Required for HIF1A mRNA stability independent of poly(A) tail length regulation. This Mus musculus (Mouse) protein is PAN2-PAN3 deadenylation complex catalytic subunit Pan2.